The chain runs to 175 residues: Protein FLOWERING LOCUS T (175 aa).

It belongs to the phosphatidylethanolamine-binding protein family. As to quaternary structure, interacts with FD/BZIP14 and FDP/BZIP27. Interacts with FTIP1/MCTP1 in phloem companion cells. Interacts with NAKR1. In terms of tissue distribution, mostly localized in leaves vasculature.

The protein resides in the cytoplasm. It is found in the nucleus. Its subcellular location is the endoplasmic reticulum. In terms of biological role, component of the mobile flower-promoting signal (floral stimulus or florigen). Promotes the transition from vegetative growth to flowering. Required for 'SEPALLATA3' (SEP3) and 'FRUITFULL' (FUL) accumulation in mature rosette leaves. Seems to acts in parallel with 'LEAFY' to induce flowering by regulating 'APETALA1'. Translated in leaves and then transported to the shoot apical meristem where it activates the transcription of several floral meristem identity genes. May play a role in both the autonomous and the long-day flowering pathways. This is Protein FLOWERING LOCUS T from Arabidopsis thaliana (Mouse-ear cress).